A 446-amino-acid chain; its full sequence is Tubulin beta-1 chain (446 aa).

Positions 11, 69, 138, 142, 143, 144, 204, and 226 each coordinate GTP. A Mg(2+)-binding site is contributed by Glu69. The tract at residues Tyr422–Asp446 is disordered. The span at Thr429–Asp446 shows a compositional bias: acidic residues.

The protein belongs to the tubulin family. Dimer of alpha and beta chains. A typical microtubule is a hollow water-filled tube with an outer diameter of 25 nm and an inner diameter of 15 nM. Alpha-beta heterodimers associate head-to-tail to form protofilaments running lengthwise along the microtubule wall with the beta-tubulin subunit facing the microtubule plus end conferring a structural polarity. Microtubules usually have 13 protofilaments but different protofilament numbers can be found in some organisms and specialized cells. Requires Mg(2+) as cofactor. In terms of tissue distribution, found in areas of rapidly dividing tissues.

It is found in the cytoplasm. The protein localises to the cytoskeleton. In terms of biological role, tubulin is the major constituent of microtubules, a cylinder consisting of laterally associated linear protofilaments composed of alpha- and beta-tubulin heterodimers. Microtubules grow by the addition of GTP-tubulin dimers to the microtubule end, where a stabilizing cap forms. Below the cap, tubulin dimers are in GDP-bound state, owing to GTPase activity of alpha-tubulin. In Zea mays (Maize), this protein is Tubulin beta-1 chain (TUBB1).